The sequence spans 207 residues: Holliday junction branch migration complex subunit RuvA (207 aa).

Residues methionine 1–glutamate 63 form a domain I region. Residues serine 64 to glutamate 142 are domain II. Residues proline 143–glutamate 154 are flexible linker. Residues valine 155–asparagine 207 are domain III.

It belongs to the RuvA family. Homotetramer. Forms an RuvA(8)-RuvB(12)-Holliday junction (HJ) complex. HJ DNA is sandwiched between 2 RuvA tetramers; dsDNA enters through RuvA and exits via RuvB. An RuvB hexamer assembles on each DNA strand where it exits the tetramer. Each RuvB hexamer is contacted by two RuvA subunits (via domain III) on 2 adjacent RuvB subunits; this complex drives branch migration. In the full resolvosome a probable DNA-RuvA(4)-RuvB(12)-RuvC(2) complex forms which resolves the HJ.

It localises to the cytoplasm. In terms of biological role, the RuvA-RuvB-RuvC complex processes Holliday junction (HJ) DNA during genetic recombination and DNA repair, while the RuvA-RuvB complex plays an important role in the rescue of blocked DNA replication forks via replication fork reversal (RFR). RuvA specifically binds to HJ cruciform DNA, conferring on it an open structure. The RuvB hexamer acts as an ATP-dependent pump, pulling dsDNA into and through the RuvAB complex. HJ branch migration allows RuvC to scan DNA until it finds its consensus sequence, where it cleaves and resolves the cruciform DNA. In Corynebacterium kroppenstedtii (strain DSM 44385 / JCM 11950 / CIP 105744 / CCUG 35717), this protein is Holliday junction branch migration complex subunit RuvA.